The primary structure comprises 527 residues: NAD(P)H-quinone oxidoreductase chain 4 1 (527 aa).

13 helical membrane-spanning segments follow: residues 6 to 26 (FPWL…VPII), 36 to 56 (WFAL…FYSS), 91 to 111 (LIIL…PVTF), 113 to 133 (PKLF…VFAV), 136 to 156 (LLLF…ILSI), 169 to 189 (FILY…TMAF), 212 to 232 (LFLY…FPLH), 243 to 263 (TAPA…YALL), 275 to 295 (AVFA…AALT), 306 to 326 (IAYS…SFTD), 331 to 351 (GAML…FMVG), 387 to 407 (LALP…GFAT), and 417 to 437 (VIIV…LLSM).

The protein belongs to the complex I subunit 4 family.

It is found in the cellular thylakoid membrane. The catalysed reaction is a plastoquinone + NADH + (n+1) H(+)(in) = a plastoquinol + NAD(+) + n H(+)(out). It catalyses the reaction a plastoquinone + NADPH + (n+1) H(+)(in) = a plastoquinol + NADP(+) + n H(+)(out). Functionally, NDH-1 shuttles electrons from NAD(P)H, via FMN and iron-sulfur (Fe-S) centers, to quinones in the respiratory chain. The immediate electron acceptor for the enzyme in this species is believed to be plastoquinone. Couples the redox reaction to proton translocation (for every two electrons transferred, four hydrogen ions are translocated across the cytoplasmic membrane), and thus conserves the redox energy in a proton gradient. In Microcystis aeruginosa (strain NIES-843 / IAM M-2473), this protein is NAD(P)H-quinone oxidoreductase chain 4 1.